Consider the following 330-residue polypeptide: Biotin synthase (330 aa).

A Radical SAM core domain is found at 42–268 (YYGRKVKLNM…INPSKEIRIA (227 aa)). The [4Fe-4S] cluster site is built by cysteine 60, cysteine 64, and cysteine 67. Residues cysteine 103, cysteine 136, cysteine 196, and arginine 266 each coordinate [2Fe-2S] cluster.

This sequence belongs to the radical SAM superfamily. Biotin synthase family. As to quaternary structure, homodimer. [4Fe-4S] cluster is required as a cofactor. Requires [2Fe-2S] cluster as cofactor.

The enzyme catalyses (4R,5S)-dethiobiotin + (sulfur carrier)-SH + 2 reduced [2Fe-2S]-[ferredoxin] + 2 S-adenosyl-L-methionine = (sulfur carrier)-H + biotin + 2 5'-deoxyadenosine + 2 L-methionine + 2 oxidized [2Fe-2S]-[ferredoxin]. It functions in the pathway cofactor biosynthesis; biotin biosynthesis; biotin from 7,8-diaminononanoate: step 2/2. In terms of biological role, catalyzes the conversion of dethiobiotin (DTB) to biotin by the insertion of a sulfur atom into dethiobiotin via a radical-based mechanism. In Macrococcus caseolyticus (strain JCSC5402) (Macrococcoides caseolyticum), this protein is Biotin synthase.